Here is a 183-residue protein sequence, read N- to C-terminus: Inner membrane-spanning protein YciB (183 aa).

5 helical membrane passes run 22–44 (IYTATGALVVVTGLQLIYSWVRY), 54–74 (TFLLVGFFGGLTVFFHDDAFI), 76–96 (WKVTVINILFALGLLISRYGF), 119–139 (VNLAWVGFFTVCGLLNLYVAF), and 149–169 (FKVFGLLGMTLVFTLLSGVYL).

This sequence belongs to the YciB family.

The protein resides in the cell inner membrane. Plays a role in cell envelope biogenesis, maintenance of cell envelope integrity and membrane homeostasis. This is Inner membrane-spanning protein YciB from Aeromonas salmonicida (strain A449).